A 179-amino-acid chain; its full sequence is Apoptosis regulator Bcl-2 homolog (179 aa).

Positions 76–95 (ELFKDLINWGRICGFIVFSA) match the BH1 motif. The BH2 signature appears at 126–141 (PWMISHGGQEEFLAFS).

This sequence belongs to the Bcl-2 family. Interacts with host BECN1 (via BH3 homology domain); this interaction allows the virus to inhibit BECN1, and thus autophagy. Interacts with host BID. Interacts with host BAX.

The protein resides in the host mitochondrion. Its subcellular location is the host endoplasmic reticulum. Suppresses apoptosis in host cell to promote the viral replication. Has the ability to potentially bind to all the members of the proapoptotic Bcl-2 family. Inhibits autophagy by interacting with host Beclin 1 (BECN1). This Ornithodoros (relapsing fever ticks) protein is Apoptosis regulator Bcl-2 homolog.